The primary structure comprises 401 residues: L-methionine gamma-lyase (401 aa).

Residues 59–61 (YTR) and 89–90 (GI) contribute to the pyridoxal 5'-phosphate site. Residue Y114 participates in substrate binding. 210-212 (SAT) serves as a coordination point for pyridoxal 5'-phosphate. K213 bears the N6-(pyridoxal phosphate)lysine mark. R377 is a substrate binding site.

It belongs to the trans-sulfuration enzymes family. L-methionine gamma-lyase subfamily. In terms of assembly, homotetramer; dimer of active dimers. Requires pyridoxal 5'-phosphate as cofactor.

The catalysed reaction is L-methionine + H2O = methanethiol + 2-oxobutanoate + NH4(+). The enzyme catalyses L-homocysteine + H2O = 2-oxobutanoate + hydrogen sulfide + NH4(+) + H(+). Catalyzes the alpha,gamma-elimination of L-methionine to produce methanethiol, 2-oxobutanoate and ammonia; methanethiol (methyl mercaptan) is considered to be one of the main causes of the oral malodor associated with periodontitis and may also play a role in the pathogenicity of T.denticola. Also displays homocysteine desulfhydrase activity, degrading homocysteine to produce hydrogen sulfide, 2-oxobutanoate and ammonia. This is L-methionine gamma-lyase from Treponema denticola (strain ATCC 35405 / DSM 14222 / CIP 103919 / JCM 8153 / KCTC 15104).